A 280-amino-acid chain; its full sequence is 4-deoxy-L-threo-5-hexosulose-uronate ketol-isomerase 1 (280 aa).

Zn(2+) is bound by residues histidine 198, histidine 200, glutamate 205, and histidine 247.

This sequence belongs to the KduI family. It depends on Zn(2+) as a cofactor.

It carries out the reaction 5-dehydro-4-deoxy-D-glucuronate = 3-deoxy-D-glycero-2,5-hexodiulosonate. It functions in the pathway glycan metabolism; pectin degradation; 2-dehydro-3-deoxy-D-gluconate from pectin: step 4/5. In terms of biological role, catalyzes the isomerization of 5-dehydro-4-deoxy-D-glucuronate to 3-deoxy-D-glycero-2,5-hexodiulosonate. This is 4-deoxy-L-threo-5-hexosulose-uronate ketol-isomerase 1 (kduI1) from Bacteroides thetaiotaomicron (strain ATCC 29148 / DSM 2079 / JCM 5827 / CCUG 10774 / NCTC 10582 / VPI-5482 / E50).